A 232-amino-acid polypeptide reads, in one-letter code: Large ribosomal subunit protein uL1 (232 aa).

It belongs to the universal ribosomal protein uL1 family. In terms of assembly, part of the 50S ribosomal subunit.

In terms of biological role, binds directly to 23S rRNA. The L1 stalk is quite mobile in the ribosome, and is involved in E site tRNA release. Functionally, protein L1 is also a translational repressor protein, it controls the translation of the L11 operon by binding to its mRNA. This Jannaschia sp. (strain CCS1) protein is Large ribosomal subunit protein uL1.